The following is a 222-amino-acid chain: MDGTDAEAPGQTAPSRAESLVAHAEASISEDALLAAARERAVDIGAGAVTPAVGALLSLLTKLSGGKAIAEVGTGAGVSGLWLLSGMSDDGVLTTIDIEPEYLRLAKQAFAEAGIGPSRTRLIGGRAQEVLTRLADEYYDLVFIDADPIDQPDYVVEGVRLLRPGGVIVVHRAALGGRAGDPAARDAEVVAVREAARLIAEDERLTPALVPLGDGILAAVRD.

Residues Val49, Glu71, 73–74 (GT), Ser79, Asp97, and Ile98 contribute to the S-adenosyl-L-methionine site. Asp145 is a binding site for substrate. Asp147 contacts S-adenosyl-L-methionine.

Belongs to the class I-like SAM-binding methyltransferase superfamily. Cation-dependent O-methyltransferase family.

The protein is Putative O-methyltransferase MAP_2558 of Mycolicibacterium paratuberculosis (strain ATCC BAA-968 / K-10) (Mycobacterium paratuberculosis).